The chain runs to 130 residues: YopE regulator (130 aa).

Positive regulator of YopE. This is YopE regulator (yerA) from Yersinia enterocolitica serotype O:8 / biotype 1B (strain NCTC 13174 / 8081).